The following is a 248-amino-acid chain: Cytochrome c oxidase subunit 2 (248 aa).

Topologically, residues 1 to 43 are mitochondrial intermembrane; that stretch reads MTNLLNNWLIINQFGYDLPEPWQLGLQDAAHPVMEEIIFFHDQ. The chain crosses the membrane as a helical span at residues 44 to 65; the sequence is VMFILIIIITTVLWLIVKALSG. Residues 66–79 lie on the Mitochondrial matrix side of the membrane; the sequence is KAYHRYLVDGTLLE. Residues 80–99 traverse the membrane as a helical segment; the sequence is IIWTIVPAIILILIAFPSLK. The Mitochondrial intermembrane portion of the chain corresponds to 100 to 248; that stretch reads LLYLMDEVMD…INWVLSGSDE (149 aa). The Cu cation site is built by His180, Cys215, Glu217, Cys219, His223, and Met226. Glu217 contacts Mg(2+).

It belongs to the cytochrome c oxidase subunit 2 family. As to quaternary structure, component of the cytochrome c oxidase (complex IV, CIV), a multisubunit enzyme composed of a catalytic core of 3 subunits and several supernumerary subunits. The complex exists as a monomer or a dimer and forms supercomplexes (SCs) in the inner mitochondrial membrane with ubiquinol-cytochrome c oxidoreductase (cytochrome b-c1 complex, complex III, CIII). It depends on Cu cation as a cofactor.

Its subcellular location is the mitochondrion inner membrane. It carries out the reaction 4 Fe(II)-[cytochrome c] + O2 + 8 H(+)(in) = 4 Fe(III)-[cytochrome c] + 2 H2O + 4 H(+)(out). Functionally, component of the cytochrome c oxidase, the last enzyme in the mitochondrial electron transport chain which drives oxidative phosphorylation. The respiratory chain contains 3 multisubunit complexes succinate dehydrogenase (complex II, CII), ubiquinol-cytochrome c oxidoreductase (cytochrome b-c1 complex, complex III, CIII) and cytochrome c oxidase (complex IV, CIV), that cooperate to transfer electrons derived from NADH and succinate to molecular oxygen, creating an electrochemical gradient over the inner membrane that drives transmembrane transport and the ATP synthase. Cytochrome c oxidase is the component of the respiratory chain that catalyzes the reduction of oxygen to water. Electrons originating from reduced cytochrome c in the intermembrane space (IMS) are transferred via the dinuclear copper A center (CU(A)) of subunit 2 and heme A of subunit 1 to the active site in subunit 1, a binuclear center (BNC) formed by heme A3 and copper B (CU(B)). The BNC reduces molecular oxygen to 2 water molecules using 4 electrons from cytochrome c in the IMS and 4 protons from the mitochondrial matrix. This Metridium senile (Brown sea anemone) protein is Cytochrome c oxidase subunit 2 (COII).